The primary structure comprises 424 residues: MKNVLAVFVVLIFVLGAFGTSGPAEAARDSGTAKSGLYVEKVSGLRKDFIKGVDVSSIIALEESGVAFYNESGKKQDIFKTLKEAGVNYVRVRIWNDPYDANGNGYGGGNNDLEKAIQIGKRATANGMKLLADFHYSDFWADPAKQKAPKAWANLNFEDKKTALYQYTKQSLKAMKAAGIDIGMVQVGNETNGGLAGETDWAKMSQLFNAGSQAVRETDSNILVALHFTNPETSGRYAWIAETLHRHHVDYDVFASSYYPFWHGTLKNLTSVLTSVADTYGKKVMVAETSYTYTAEDGDGHGNTAPKNGQTLNNPVTVQGQANAVRDVIQAVSDVGEAGIGVFYWEPAWIPVGPAHRLEKNKALWETYGSGWATSYAAEYDPEDAGKWFGGSAVDNQALFDFKGRPLPSLHVFQYVDTGTPFKN.

The first 26 residues, 1–26, serve as a signal peptide directing secretion; sequence MKNVLAVFVVLIFVLGAFGTSGPAEA. Substrate is bound at residue 142-145; it reads DPAK. Glu-190 acts as the Proton donor in catalysis. Substrate-binding positions include 229–230 and His-263; that span reads TN. Glu-288 (nucleophile) is an active-site residue. Thr-292 provides a ligand contact to substrate. Ca(2+) contacts are provided by Asp-297, Asp-299, His-301, and Asn-303. Substrate-binding residues include Lys-307 and Asp-384. Ca(2+)-binding residues include Ser-392 and Asp-395.

The protein belongs to the glycosyl hydrolase 53 family. Ca(2+) is required as a cofactor.

It carries out the reaction The enzyme specifically hydrolyzes (1-&gt;4)-beta-D-galactosidic linkages in type I arabinogalactans.. Functionally, involved in galactan degradation. Degrades arabinose-free galactan to galactooligosaccharides, producing galactotetraose as the main product along with galactotriose, galactobiose, and galactose. May hydrolyze the beta-1,4-galactan linkages of the galactan portion of arabinogalactan type I, a pectic plant polysaccharide from which most of the arabinose has been removed. The protein is Endo-beta-1,4-galactanase (ganB) of Bacillus licheniformis (strain ATCC 14580 / DSM 13 / JCM 2505 / CCUG 7422 / NBRC 12200 / NCIMB 9375 / NCTC 10341 / NRRL NRS-1264 / Gibson 46).